The primary structure comprises 169 residues: Cytochrome c-type biogenesis protein CcmE (169 aa).

Topologically, residues 1–7 (MTRKSRR) are cytoplasmic. A helical; Signal-anchor for type II membrane protein membrane pass occupies residues 8-28 (LILIAACGAVLALALGLILSA). At 29 to 169 (MSGSIVFFRS…DATLGQRSER (141 aa)) the chain is on the periplasmic side. The heme site is built by histidine 122 and tyrosine 126. A disordered region spans residues 135 to 169 (LKAQGRWQEGGGKEAPKDAAKPASADATLGQRSER). The segment covering 145–154 (GGKEAPKDAA) has biased composition (basic and acidic residues).

The protein belongs to the CcmE/CycJ family.

It localises to the cell inner membrane. Functionally, heme chaperone required for the biogenesis of c-type cytochromes. Transiently binds heme delivered by CcmC and transfers the heme to apo-cytochromes in a process facilitated by CcmF and CcmH. The sequence is that of Cytochrome c-type biogenesis protein CcmE from Methylorubrum populi (strain ATCC BAA-705 / NCIMB 13946 / BJ001) (Methylobacterium populi).